We begin with the raw amino-acid sequence, 87 residues long: MLWLPDRGSCSARSPSGMLRGAPGGWRYGRRCGRRRQSCCCCCCCSHVGAPLSFHREASLVSHDGHDIMKQHCGEESIRGAHGYKNK.

Interacts with PAF1 complex member PAF1. Interacts with transcription factor FOXM1. In terms of tissue distribution, expressed in brain, liver, kidney and stomach with lower levels in breast, intestine, thyroid and pancreas.

The protein resides in the nucleus. In terms of biological role, enhances the binding of the PAF1 complex to target gene promoters and plays a role in negative regulation of transcription. May function as an anchor to keep the PAF1 complex on target gene promoters, sequentially pausing RNA polymerase II-induced mRNA elongation. Inhibits FOXM1-mediated transcription of PHB2. The polypeptide is Transcriptional regulator PINT87aa (Homo sapiens (Human)).